The following is a 285-amino-acid chain: 4-diphosphocytidyl-2-C-methyl-D-erythritol kinase (285 aa).

Lys-11 is an active-site residue. An ATP-binding site is contributed by 95 to 105; it reads PVAAGIGGGSA. The active site involves Asp-137.

This sequence belongs to the GHMP kinase family. IspE subfamily.

It catalyses the reaction 4-CDP-2-C-methyl-D-erythritol + ATP = 4-CDP-2-C-methyl-D-erythritol 2-phosphate + ADP + H(+). Its pathway is isoprenoid biosynthesis; isopentenyl diphosphate biosynthesis via DXP pathway; isopentenyl diphosphate from 1-deoxy-D-xylulose 5-phosphate: step 3/6. In terms of biological role, catalyzes the phosphorylation of the position 2 hydroxy group of 4-diphosphocytidyl-2C-methyl-D-erythritol. This is 4-diphosphocytidyl-2-C-methyl-D-erythritol kinase from Paramagnetospirillum magneticum (strain ATCC 700264 / AMB-1) (Magnetospirillum magneticum).